We begin with the raw amino-acid sequence, 70 residues long: MDKRLLEILVCPVCKGGLIYLREQQELVCLADKLAYPIRDDIPVMLDSEARRLSLEEYDALRQRRAAPVA.

It belongs to the UPF0434 family.

The polypeptide is UPF0434 protein MCA0634 (Methylococcus capsulatus (strain ATCC 33009 / NCIMB 11132 / Bath)).